A 675-amino-acid chain; its full sequence is Protein brown (675 aa).

Residues 1-419 lie on the Cytoplasmic side of the membrane; sequence MQESGGSSGQ…TEDLRNIRSG (419 aa). An ABC transporter domain is found at 34–261; sequence YSFWNECRKK…EVVAESHESL (228 aa). An ATP-binding site is contributed by 66–73; that stretch reads GGSGAGKT. The segment at 229 to 249 is disordered; sequence EDSFETPSGESSASGSGSKSI. The span at 236 to 248 shows a compositional bias: low complexity; it reads SGESSASGSGSKS. A helical transmembrane segment spans residues 420–440; sequence LIAFGFFMITAVTLSLMYSGI. Over 441–460 the chain is Extracellular; it reads GGLTQRTVQDVGGSIFMLSN. A helical transmembrane segment spans residues 461 to 481; sequence EMIFTFSYGVTYIFPAALPII. The Cytoplasmic portion of the chain corresponds to 482-497; the sequence is RREVGEGTYSLSAYYV. Residues 498 to 518 traverse the membrane as a helical segment; it reads ALVLSFVPVAFFKGYVFLSVI. Topologically, residues 519–531 are extracellular; sequence YASIYYTRGFLLY. The chain crosses the membrane as a helical span at residues 532–552; sequence LSMGFLMSLSAVAAVGYGVFL. At 553 to 568 the chain is on the cytoplasmic side; that stretch reads SSLFESDKMASECAAP. A helical transmembrane segment spans residues 569–589; the sequence is FDLIFLIFGGTYMNVDTVPGL. Topologically, residues 590-644 are extracellular; the sequence is KYLSLFFYSNEALMYKFWIDIDNIDCPVNEDHPCIKTGVEVLQQGSYRNADYTYW. A helical membrane pass occupies residues 645–665; it reads LDCFSLVVVAVIFHIVSFGLV. The Cytoplasmic segment spans residues 666–675; it reads RRYIHRSGYY.

The protein belongs to the ABC transporter superfamily. ABCG family. Eye pigment precursor importer (TC 3.A.1.204) subfamily. May form a heterodimer with w/white.

It localises to the membrane. The catalysed reaction is guanine(out) + ATP + H2O = guanine(in) + ADP + phosphate + H(+). It carries out the reaction riboflavin(in) + ATP + H2O = riboflavin(out) + ADP + phosphate + H(+). It catalyses the reaction (6S)-5,6,7,8-tetrahydrofolate(out) + ATP + H2O = (6S)-5,6,7,8-tetrahydrofolate(in) + ADP + phosphate + H(+). ATP-dependent transporter of the ATP-binding cassette (ABC) family which transports various molecules including bioamines, neurotransmitters and metabolic intermediates. In the eye and probably in association with w/white, required for the transport of the eye red pigment precursor, guanine, into pigment cell granules. In Malpighian tubules, involved in guanine uptake. Probably in association with w/white, involved in aging-induced intestinal stem cell proliferation in the midgut by regulating tetrahydrofolate transport. The chain is Protein brown from Drosophila melanogaster (Fruit fly).